Here is an 854-residue protein sequence, read N- to C-terminus: Probable disease resistance protein At1g51480 (854 aa).

Residues 25–62 (RNYIHKMEANLDDLHTTMEELKNGRDDLLRRVSIEEDK) are a coiled coil. Positions 138–441 (AHKIPVPKVE…CEGYINPNRY (304 aa)) constitute an NB-ARC domain. Residue 180–187 (GMGGVGKT) participates in ATP binding. LRR repeat units follow at residues 514–535 (IVRQ…SKCS), 536–557 (NLST…FFLF), 560–582 (KLVV…ISNL), 584–605 (SLQY…MKKL), 607–629 (KLIY…SATL), and 631–652 (NLQV…MEEL).

It belongs to the disease resistance NB-LRR family.

Its function is as follows. Probable disease resistance protein. The chain is Probable disease resistance protein At1g51480 from Arabidopsis thaliana (Mouse-ear cress).